The chain runs to 168 residues: Dihydrofolate reductase (168 aa).

Residues 1–164 (MIIGIWAEDE…YTFTIKKYEK (164 aa)) form the DHFR domain. Residue 5–7 (IWA) participates in substrate binding. Residues 6–7 (WA) and 14–19 (IGEADK) contribute to the NADP(+) site. Residue Glu27 participates in substrate binding. Residue 43 to 46 (GRKT) coordinates NADP(+). A substrate-binding site is contributed by Arg58. NADP(+)-binding positions include 63–66 (LTRD) and 99–104 (TGGAEI). Residue Thr118 participates in substrate binding.

This sequence belongs to the dihydrofolate reductase family.

It catalyses the reaction (6S)-5,6,7,8-tetrahydrofolate + NADP(+) = 7,8-dihydrofolate + NADPH + H(+). The protein operates within cofactor biosynthesis; tetrahydrofolate biosynthesis; 5,6,7,8-tetrahydrofolate from 7,8-dihydrofolate: step 1/1. In terms of biological role, key enzyme in folate metabolism. Catalyzes an essential reaction for de novo glycine and purine synthesis, and for DNA precursor synthesis. The protein is Dihydrofolate reductase (folA) of Lactococcus lactis subsp. lactis (strain IL1403) (Streptococcus lactis).